The chain runs to 477 residues: Diphthine methyltransferase (477 aa).

3 WD repeats span residues 194–232 (HFEA…TPVF), 236–276 (RHCM…QPLA), and 422–464 (VKTR…ARTL).

It belongs to the DPH7 family. As to quaternary structure, interacts with INCA1.

The catalysed reaction is diphthine methyl ester-[translation elongation factor 2] + H2O = diphthine-[translation elongation factor 2] + methanol + H(+). It participates in protein modification; peptidyl-diphthamide biosynthesis. In terms of biological role, catalyzes the demethylation of diphthine methyl ester to form diphthine, an intermediate diphthamide biosynthesis, a post-translational modification of histidine which occurs in translation elongation factor 2 (EEF2). This chain is Diphthine methyltransferase (Dph7), found in Mus musculus (Mouse).